The chain runs to 212 residues: Uridine kinase (212 aa).

13–20 (GGSGSGKT) is a binding site for ATP.

It belongs to the uridine kinase family.

It localises to the cytoplasm. The enzyme catalyses uridine + ATP = UMP + ADP + H(+). The catalysed reaction is cytidine + ATP = CMP + ADP + H(+). The protein operates within pyrimidine metabolism; CTP biosynthesis via salvage pathway; CTP from cytidine: step 1/3. Its pathway is pyrimidine metabolism; UMP biosynthesis via salvage pathway; UMP from uridine: step 1/1. The polypeptide is Uridine kinase (Bacillus cytotoxicus (strain DSM 22905 / CIP 110041 / 391-98 / NVH 391-98)).